Here is a 673-residue protein sequence, read N- to C-terminus: Transcription initiation factor IIB (673 aa).

Residues 38–69 form a TFIIB-type zinc finger; the sequence is EEIVCPICGSKEVVKDYERAEIVCAKCGCVIK. The Zn(2+) site is built by cysteine 42, cysteine 45, cysteine 61, and cysteine 64. The 120-residue stretch at 238-357 folds into the DOD-type homing endonuclease domain; it reads ILGYIIAEGY…VIFLLLQIKE (120 aa). Repeat copies occupy residues 490–573 and 584–665.

This sequence belongs to the TFIIB family. This protein undergoes a protein self splicing that involves a post-translational excision of the intervening region (intein) followed by peptide ligation.

Stabilizes TBP binding to an archaeal box-A promoter. Also responsible for recruiting RNA polymerase II to the pre-initiation complex (DNA-TBP-TFIIB). The protein is Transcription initiation factor IIB (tfb) of Methanocaldococcus jannaschii (strain ATCC 43067 / DSM 2661 / JAL-1 / JCM 10045 / NBRC 100440) (Methanococcus jannaschii).